The chain runs to 65 residues: Weak toxin CM-13b (65 aa).

5 disulfide bridges follow: cysteine 3-cysteine 24, cysteine 6-cysteine 11, cysteine 17-cysteine 42, cysteine 46-cysteine 57, and cysteine 58-cysteine 63.

This sequence belongs to the three-finger toxin family. Ancestral subfamily. Orphan group II sub-subfamily. In terms of tissue distribution, expressed by the venom gland.

The protein resides in the secreted. Binds with low affinity to muscular (alpha-1-beta-1-delta-epsilon/CHRNA1-CHRNB1-CHRND-CHRNE) and very low affinity to neuronal (alpha-7/CHRNA7) nicotinic acetylcholine receptor (nAChR). This chain is Weak toxin CM-13b, found in Naja annulifera (Banded Egyptian cobra).